Here is a 948-residue protein sequence, read N- to C-terminus: Valine--tRNA ligase (948 aa).

The 'HIGH' region motif lies at 40 to 50 (PNVTGSLHMGH). The short motif at 551 to 555 (KMSKS) is the 'KMSKS' region element. ATP is bound at residue K554. Positions 879–945 (LIDKGAELAR…GKLAEQHARI (67 aa)) form a coiled coil.

The protein belongs to the class-I aminoacyl-tRNA synthetase family. ValS type 1 subfamily. Monomer.

The protein localises to the cytoplasm. It catalyses the reaction tRNA(Val) + L-valine + ATP = L-valyl-tRNA(Val) + AMP + diphosphate. Its function is as follows. Catalyzes the attachment of valine to tRNA(Val). As ValRS can inadvertently accommodate and process structurally similar amino acids such as threonine, to avoid such errors, it has a 'posttransfer' editing activity that hydrolyzes mischarged Thr-tRNA(Val) in a tRNA-dependent manner. The chain is Valine--tRNA ligase from Pseudomonas syringae pv. syringae (strain B728a).